Reading from the N-terminus, the 92-residue chain is Small ribosomal subunit protein uS19 (92 aa).

The protein belongs to the universal ribosomal protein uS19 family.

Its function is as follows. Protein S19 forms a complex with S13 that binds strongly to the 16S ribosomal RNA. The sequence is that of Small ribosomal subunit protein uS19 from Borreliella afzelii (strain PKo) (Borrelia afzelii).